The following is a 375-amino-acid chain: MSTAGKVIKCKAAVLWELKKPFSIEEVEVAPPKAHEVRIKMVAAGICRSDEHVVSGNLVTPLPVILGHEAAGIVESVGEGVTTVKPGDKVIPLFTPQCGKCRICKNPESNYCLKNDLGNPRGTLQDGTRRFTCSGKPIHHFVGVSTFSQYTVVDENAVAKIDAASPLEKVCLIGCGFSTGYGSAVKVAKVTPGSTCAVFGLGGVGLSVVMGCKAAGAARIIAVDINKDKFAKAKELGATECINPQDYKKPIQEVLKEMTDGGVDFSFEVIGRLDTMMASLLCCHEACGTSVIVGVPPDSQNLSINPMLLLTGRTWKGAIFGGFKSKESVPKLVADFMAKKFSLDALITNILPFEKINEGFDLLRSGKSIRTVLTF.

Serine 2 carries the post-translational modification N-acetylserine. Serine 23 carries the phosphoserine modification. Zn(2+) is bound by residues cysteine 47, histidine 68, cysteine 98, cysteine 101, cysteine 104, cysteine 112, and cysteine 175. Residues 200-205, aspartate 224, lysine 229, isoleucine 270, 293-295, 318-320, and arginine 370 each bind NAD(+); these read GLGGVG, VGV, and AIF.

This sequence belongs to the zinc-containing alcohol dehydrogenase family. As to quaternary structure, dimer of identical or non-identical chains of class I alcohol dehydrogenase: ADH1A, ADH1B, and ADH1C. Requires Zn(2+) as cofactor.

The protein resides in the cytoplasm. It catalyses the reaction a primary alcohol + NAD(+) = an aldehyde + NADH + H(+). It carries out the reaction ethanol + NAD(+) = acetaldehyde + NADH + H(+). Functionally, alcohol dehydrogenase. Exhibits high activity for ethanol oxidation and plays a major role in ethanol catabolism. The sequence is that of Alcohol dehydrogenase 1C (ADH1C) from Homo sapiens (Human).